A 272-amino-acid chain; its full sequence is Shikimate dehydrogenase (NADP(+)) (272 aa).

Shikimate-binding positions include 14–16 and T61; that span reads SKS. K65 (proton acceptor) is an active-site residue. Position 77 (E77) interacts with NADP(+). 2 residues coordinate shikimate: N86 and D102. Residues 126–130, 149–154, and M213 contribute to the NADP(+) site; these read GAGGA and NRTVSR. Y215 serves as a coordination point for shikimate. Residue G237 participates in NADP(+) binding.

The protein belongs to the shikimate dehydrogenase family. As to quaternary structure, homodimer.

It catalyses the reaction shikimate + NADP(+) = 3-dehydroshikimate + NADPH + H(+). Its pathway is metabolic intermediate biosynthesis; chorismate biosynthesis; chorismate from D-erythrose 4-phosphate and phosphoenolpyruvate: step 4/7. In terms of biological role, involved in the biosynthesis of the chorismate, which leads to the biosynthesis of aromatic amino acids. Catalyzes the reversible NADPH linked reduction of 3-dehydroshikimate (DHSA) to yield shikimate (SA). The chain is Shikimate dehydrogenase (NADP(+)) from Shigella dysenteriae serotype 1 (strain Sd197).